The chain runs to 300 residues: MGFQIEGVIPALITPFTDDLKGINEEGLRENVSRLLEAGVHGVVPAGTTGESSTLSHAEHRRVIEIVVDEVNGKVPVIAGAGSNSTREALELSTYAEDVGADAILSVVPYYNKPPQEGLFIHFSKIAEAVECPIILYNVPSRTGCALEPETAAKLAEEYSHIVGVKEASGDLDVVQRFIEETPDDFILLSGVDELTLPILAVGGVGVISVTANVAPELMVEMYEAWKSGDVERARELHYELLPLHRALFTETNPIPVKAAVELVGMASSPPRPPLKEAREDTKELLRRELKKLGLLPEGG.

T49 contacts pyruvate. The active-site Proton donor/acceptor is the Y137. The active-site Schiff-base intermediate with substrate is the K166. I208 is a binding site for pyruvate.

This sequence belongs to the DapA family. Homotetramer; dimer of dimers.

Its subcellular location is the cytoplasm. The catalysed reaction is L-aspartate 4-semialdehyde + pyruvate = (2S,4S)-4-hydroxy-2,3,4,5-tetrahydrodipicolinate + H2O + H(+). It participates in amino-acid biosynthesis; L-lysine biosynthesis via DAP pathway; (S)-tetrahydrodipicolinate from L-aspartate: step 3/4. Catalyzes the condensation of (S)-aspartate-beta-semialdehyde [(S)-ASA] and pyruvate to 4-hydroxy-tetrahydrodipicolinate (HTPA). The protein is 4-hydroxy-tetrahydrodipicolinate synthase of Methanopyrus kandleri (strain AV19 / DSM 6324 / JCM 9639 / NBRC 100938).